Reading from the N-terminus, the 284-residue chain is Lipoyl synthase (284 aa).

The [4Fe-4S] cluster site is built by C36, C41, C47, C62, C66, C69, and S273. The Radical SAM core domain maps to W48–R262.

This sequence belongs to the radical SAM superfamily. Lipoyl synthase family. [4Fe-4S] cluster serves as cofactor.

Its subcellular location is the cytoplasm. The catalysed reaction is [[Fe-S] cluster scaffold protein carrying a second [4Fe-4S](2+) cluster] + N(6)-octanoyl-L-lysyl-[protein] + 2 oxidized [2Fe-2S]-[ferredoxin] + 2 S-adenosyl-L-methionine + 4 H(+) = [[Fe-S] cluster scaffold protein] + N(6)-[(R)-dihydrolipoyl]-L-lysyl-[protein] + 4 Fe(3+) + 2 hydrogen sulfide + 2 5'-deoxyadenosine + 2 L-methionine + 2 reduced [2Fe-2S]-[ferredoxin]. It participates in protein modification; protein lipoylation via endogenous pathway; protein N(6)-(lipoyl)lysine from octanoyl-[acyl-carrier-protein]: step 2/2. Catalyzes the radical-mediated insertion of two sulfur atoms into the C-6 and C-8 positions of the octanoyl moiety bound to the lipoyl domains of lipoate-dependent enzymes, thereby converting the octanoylated domains into lipoylated derivatives. The sequence is that of Lipoyl synthase from Phocaeicola vulgatus (strain ATCC 8482 / DSM 1447 / JCM 5826 / CCUG 4940 / NBRC 14291 / NCTC 11154) (Bacteroides vulgatus).